A 522-amino-acid chain; its full sequence is Terpineol synthase, chloroplastic (522 aa).

(2E)-geranyl diphosphate is bound by residues Arg-242, Asp-279, Asp-283, Arg-414, and Asn-417. Asp-279 and Asp-283 together coordinate Mg(2+). A DDXXD motif motif is present at residues 279-283 (DDVYD). Mg(2+)-binding residues include Asn-417, Thr-421, and Glu-425.

Belongs to the terpene synthase family. Tpsb subfamily. As to quaternary structure, monomer. The cofactor is Mg(2+). Requires Mn(2+) as cofactor. In terms of tissue distribution, confined to flowers.

It is found in the plastid. Its subcellular location is the chloroplast. It catalyses the reaction (2E)-geranyl diphosphate + H2O = (S)-alpha-terpineol + diphosphate. The enzyme catalyses (2E)-geranyl diphosphate = sabinene + diphosphate. The catalysed reaction is (2E)-geranyl diphosphate = beta-myrcene + diphosphate. It carries out the reaction (2E)-geranyl diphosphate = limonene + diphosphate. It catalyses the reaction (2E)-geranyl diphosphate + H2O = 1,8-cineole + diphosphate. The enzyme catalyses (2E)-geranyl diphosphate = alpha-pinene + diphosphate. It participates in secondary metabolite biosynthesis; terpenoid biosynthesis. In terms of biological role, monoterpene synthase (TPS) involved in the biosynthesis of monoterpene natural products of the 'cineole cassette', volatile compounds present in floral scent. Catalyzes the conversion of (2E)-geranyl diphosphate (GPP) into alpha-terpineol and, as minor products, sabinene, beta-myrcene, limonene, alpha-pinene and 1,8-cineole. The protein is Terpineol synthase, chloroplastic of Nicotiana langsdorffii (Langsdorff's tobacco).